An 892-amino-acid polypeptide reads, in one-letter code: Putative ubiquitin carboxyl-terminal hydrolase 11 (892 aa).

One can recognise a DUSP domain in the interval 17 to 132 (YTPEEERRIV…GGPPVPRKLI (116 aa)). A disordered region spans residues 69–89 (EPSEVTRPGPIDNHDIIDSES). Residues 301-880 (GGLQNLGNTC…AAYVLFYQRV (580 aa)) form the USP domain. The Nucleophile role is filled by Cys-310. The tract at residues 636 to 660 (NSGNENGHVPDESSRSILSRDTETE) is disordered. The span at 643–657 (HVPDESSRSILSRDT) shows a compositional bias: basic and acidic residues. Catalysis depends on His-838, which acts as the Proton acceptor.

It belongs to the peptidase C19 family.

The catalysed reaction is Thiol-dependent hydrolysis of ester, thioester, amide, peptide and isopeptide bonds formed by the C-terminal Gly of ubiquitin (a 76-residue protein attached to proteins as an intracellular targeting signal).. Its function is as follows. Recognizes and hydrolyzes the peptide bond at the C-terminal Gly of ubiquitin. Involved in the processing of poly-ubiquitin precursors as well as that of ubiquitinated proteins. The sequence is that of Putative ubiquitin carboxyl-terminal hydrolase 11 (UBP11) from Arabidopsis thaliana (Mouse-ear cress).